The sequence spans 442 residues: D-serine dehydratase (442 aa).

An N6-(pyridoxal phosphate)lysine modification is found at Lys118.

The protein belongs to the serine/threonine dehydratase family. DsdA subfamily. In terms of assembly, monomer. The cofactor is pyridoxal 5'-phosphate.

It catalyses the reaction D-serine = pyruvate + NH4(+). This is D-serine dehydratase from Escherichia coli O6:H1 (strain CFT073 / ATCC 700928 / UPEC).